Here is a 360-residue protein sequence, read N- to C-terminus: Photosystem II protein D1 (360 aa).

A run of 3 helical transmembrane segments spans residues 29–46, 118–133, and 142–156; these read YIGW…TATT, HFLL…QWEL, and WICV…AATA. Histidine 118 lines the chlorophyll a pocket. Tyrosine 126 serves as a coordination point for pheophytin a. [CaMn4O5] cluster contacts are provided by aspartate 170 and glutamate 189. The chain crosses the membrane as a helical span at residues 197 to 218; it reads FHMLGVAGVFGGSLFSAMHGSL. Histidine 198 is a binding site for chlorophyll a. A quinone contacts are provided by residues histidine 215 and 264–265; that span reads SF. A Fe cation-binding site is contributed by histidine 215. Histidine 272 is a binding site for Fe cation. The chain crosses the membrane as a helical span at residues 274 to 288; that stretch reads FLGAWPVIGIWFTAM. Histidine 332, glutamate 333, aspartate 342, and alanine 344 together coordinate [CaMn4O5] cluster. Residues 345–360 constitute a propeptide that is removed on maturation; it reads SGEQAPVALIAPAING.

The protein belongs to the reaction center PufL/M/PsbA/D family. As to quaternary structure, PSII is composed of 1 copy each of membrane proteins PsbA, PsbB, PsbC, PsbD, PsbE, PsbF, PsbH, PsbI, PsbJ, PsbK, PsbL, PsbM, PsbT, PsbX, PsbY, PsbZ, Psb30/Ycf12, peripheral proteins PsbO, CyanoQ (PsbQ), PsbU, PsbV and a large number of cofactors. It forms dimeric complexes. Requires The D1/D2 heterodimer binds P680, chlorophylls that are the primary electron donor of PSII, and subsequent electron acceptors. It shares a non-heme iron and each subunit binds pheophytin, quinone, additional chlorophylls, carotenoids and lipids. D1 provides most of the ligands for the Mn4-Ca-O5 cluster of the oxygen-evolving complex (OEC). There is also a Cl(-1) ion associated with D1 and D2, which is required for oxygen evolution. The PSII complex binds additional chlorophylls, carotenoids and specific lipids. as cofactor. Tyr-161 forms a radical intermediate that is referred to as redox-active TyrZ, YZ or Y-Z. Post-translationally, C-terminally processed by CtpA; processing is essential to allow assembly of the oxygen-evolving complex and thus photosynthetic growth.

The protein localises to the cellular thylakoid membrane. The enzyme catalyses 2 a plastoquinone + 4 hnu + 2 H2O = 2 a plastoquinol + O2. Photosystem II (PSII) is a light-driven water:plastoquinone oxidoreductase that uses light energy to abstract electrons from H(2)O, generating O(2) and a proton gradient subsequently used for ATP formation. It consists of a core antenna complex that captures photons, and an electron transfer chain that converts photonic excitation into a charge separation. The D1/D2 (PsbA/PsbD) reaction center heterodimer binds P680, the primary electron donor of PSII as well as several subsequent electron acceptors. The polypeptide is Photosystem II protein D1 (Microcystis aeruginosa (strain NIES-843 / IAM M-2473)).